Here is an 805-residue protein sequence, read N- to C-terminus: Phenylalanine--tRNA ligase beta subunit (805 aa).

The region spanning 40 to 162 is the tRNA-binding domain; that stretch reads FKNPDYLQLG…NRDEFGDYLS (123 aa). Residues 412 to 486 enclose the B5 domain; it reads AFNRKIYLNF…KILDLNKIKE (75 aa). Mg(2+) is bound by residues Asp464, Asp470, Glu473, and Glu474.

Belongs to the phenylalanyl-tRNA synthetase beta subunit family. Type 1 subfamily. In terms of assembly, tetramer of two alpha and two beta subunits. Requires Mg(2+) as cofactor.

It is found in the cytoplasm. The enzyme catalyses tRNA(Phe) + L-phenylalanine + ATP = L-phenylalanyl-tRNA(Phe) + AMP + diphosphate + H(+). The polypeptide is Phenylalanine--tRNA ligase beta subunit (pheT) (Mycoplasma pneumoniae (strain ATCC 29342 / M129 / Subtype 1) (Mycoplasmoides pneumoniae)).